A 93-amino-acid polypeptide reads, in one-letter code: Co-chaperonin GroES (93 aa).

It belongs to the GroES chaperonin family. As to quaternary structure, heptamer of 7 subunits arranged in a ring. Interacts with the chaperonin GroEL.

The protein localises to the cytoplasm. Functionally, together with the chaperonin GroEL, plays an essential role in assisting protein folding. The GroEL-GroES system forms a nano-cage that allows encapsulation of the non-native substrate proteins and provides a physical environment optimized to promote and accelerate protein folding. GroES binds to the apical surface of the GroEL ring, thereby capping the opening of the GroEL channel. This is Co-chaperonin GroES from Lacticaseibacillus paracasei (strain ATCC 334 / BCRC 17002 / CCUG 31169 / CIP 107868 / KCTC 3260 / NRRL B-441) (Lactobacillus paracasei).